A 152-amino-acid polypeptide reads, in one-letter code: Cytochrome c-type biogenesis protein CcmE (152 aa).

At 1–9 (MRGLKKQRR) the chain is on the cytoplasmic side. The chain crosses the membrane as a helical; Signal-anchor for type II membrane protein span at residues 10 to 30 (IQILIVAAVALTLSSVLIGYA). The Periplasmic portion of the chain corresponds to 31-152 (LRDGINFFRP…PDGYARDGDS (122 aa)). Residues histidine 123 and tyrosine 127 each contribute to the heme site.

The protein belongs to the CcmE/CycJ family.

It localises to the cell inner membrane. Heme chaperone required for the biogenesis of c-type cytochromes. Transiently binds heme delivered by CcmC and transfers the heme to apo-cytochromes in a process facilitated by CcmF and CcmH. This chain is Cytochrome c-type biogenesis protein CcmE, found in Jannaschia sp. (strain CCS1).